We begin with the raw amino-acid sequence, 312 residues long: Malate dehydrogenase (312 aa).

NAD(+) is bound by residues 7–13 (GAAGGIG) and aspartate 34. Residues arginine 81 and arginine 87 each coordinate substrate. NAD(+) is bound by residues asparagine 94 and 117–119 (ITN). 2 residues coordinate substrate: asparagine 119 and arginine 153. Histidine 177 (proton acceptor) is an active-site residue. Methionine 227 provides a ligand contact to NAD(+).

The protein belongs to the LDH/MDH superfamily. MDH type 1 family. In terms of assembly, homodimer.

It catalyses the reaction (S)-malate + NAD(+) = oxaloacetate + NADH + H(+). In terms of biological role, catalyzes the reversible oxidation of malate to oxaloacetate. This Serratia proteamaculans (strain 568) protein is Malate dehydrogenase.